The following is a 187-amino-acid chain: Elongation factor P (187 aa).

Belongs to the elongation factor P family.

It localises to the cytoplasm. The protein operates within protein biosynthesis; polypeptide chain elongation. In terms of biological role, involved in peptide bond synthesis. Stimulates efficient translation and peptide-bond synthesis on native or reconstituted 70S ribosomes in vitro. Probably functions indirectly by altering the affinity of the ribosome for aminoacyl-tRNA, thus increasing their reactivity as acceptors for peptidyl transferase. The chain is Elongation factor P from Arthrobacter sp. (strain FB24).